The primary structure comprises 147 residues: Small ribosomal subunit protein uS12 (147 aa).

Belongs to the universal ribosomal protein uS12 family. As to quaternary structure, part of the 30S ribosomal subunit.

Its function is as follows. With S4 and S5 plays an important role in translational accuracy. Located at the interface of the 30S and 50S subunits. The sequence is that of Small ribosomal subunit protein uS12 from Ignicoccus hospitalis (strain KIN4/I / DSM 18386 / JCM 14125).